A 232-amino-acid polypeptide reads, in one-letter code: Peroxiredoxin (232 aa).

The Thioredoxin domain maps to 6-161; it reads PSIGEKFPEI…ILRLIESLQI (156 aa). Cys-48 (cysteine sulfenic acid (-SOH) intermediate) is an active-site residue. Arg-124 is a binding site for substrate. A disulfide bond links Cys-203 and Cys-209.

It belongs to the peroxiredoxin family. Prx6 subfamily. Homodecamer. Pentamer of dimers that assemble into a ring structure.

The protein localises to the cytoplasm. It carries out the reaction a hydroperoxide + [thioredoxin]-dithiol = an alcohol + [thioredoxin]-disulfide + H2O. Its function is as follows. Thiol-specific peroxidase that catalyzes the reduction of hydrogen peroxide and organic hydroperoxides to water and alcohols, respectively. Plays a role in cell protection against oxidative stress by detoxifying peroxides. The protein is Peroxiredoxin of Hyperthermus butylicus (strain DSM 5456 / JCM 9403 / PLM1-5).